Consider the following 990-residue polypeptide: Storkhead-box protein 1 (990 aa).

The segment covering 396–408 has biased composition (basic and acidic residues); sequence TTRHKDSSKEVIG. Disordered regions lie at residues 396–471, 562–586, 712–736, and 809–832; these read TTRH…VHHL, VAKA…PRRV, GLSD…DGGC, and LFSN…SRIP. Positions 416–431 are enriched in basic residues; the sequence is KSRRRGSSHKGRHKAR. Residues 809–830 show a composition bias toward polar residues; that stretch reads LFSNAGESPNPDLSDNPGQNSR.

In terms of tissue distribution, detected in sensory epithelial cells of the inner ear but not in adjacent surrounding tissue (at protein level).

It is found in the nucleus. Its subcellular location is the cytoplasm. It localises to the cytoskeleton. The protein resides in the microtubule organizing center. The protein localises to the centrosome. Involved in regulating the levels of reactive oxidative species and reactive nitrogen species and in mitochondrial homeostasis in the placenta. Required for regulation of inner ear epithelial cell proliferation via the AKT signaling pathway. Involved in cell cycle regulation by binding to the CCNB1 promoter, up-regulating its expression and promoting mitotic entry. Induces phosphorylation of MAPT/tau. This chain is Storkhead-box protein 1, found in Mus musculus (Mouse).